Consider the following 438-residue polypeptide: Aminopeptidase E (438 aa).

Residues Cys70, His362, and Asn383 contribute to the active site.

This sequence belongs to the peptidase C1 family.

Its subcellular location is the cytoplasm. Functionally, can hydrolyze internal peptide bonds in Met-enkephalin and bradykinin; however, hydrolysis of alpha-, beta-, and kappa-caseins is not detected. The chain is Aminopeptidase E (pepE) from Lactobacillus helveticus (Lactobacillus suntoryeus).